The following is a 4042-amino-acid chain: Polyketide synthase-nonribosomal peptide synthetase ffsA (4042 aa).

Positions Arg-17–Ala-453 constitute a Ketosynthase family 3 (KS3) domain. Active-site for beta-ketoacyl synthase activity residues include Cys-190, His-330, and His-373. The interval Val-561 to Asp-878 is malonyl-CoA:ACP transacylase (MAT) domain. The N-terminal hotdog fold stretch occupies residues His-950–Pro-1083. The interval His-950 to Thr-1249 is dehydratase (DH) domain. The PKS/mFAS DH domain maps to His-950–Ala-1251. Catalysis depends on His-982, which acts as the Proton acceptor; for dehydratase activity. Residues Met-1098–Ala-1251 are C-terminal hotdog fold. Asp-1158 serves as the catalytic Proton donor; for dehydratase activity. The tract at residues Asp-1390–Asp-1613 is methyltransferase (MT) domain. Residues Thr-2116–Ile-2289 are ketoreductase (KR)domain. The Carrier 1 domain maps to Glu-2399–Leu-2476. Ser-2436 bears the O-(pantetheine 4'-phosphoryl)serine mark. Positions Glu-2515–Ile-2601 are disordered. Positions Ala-2520–Pro-2532 are enriched in acidic residues. The condensation stretch occupies residues Arg-2629 to Gln-3061. The tract at residues Glu-3089 to Arg-3486 is adenylation. A Carrier 2 domain is found at Arg-3607–Ala-3684. Ser-3644 is subject to O-(pantetheine 4'-phosphoryl)serine. The segment at Ile-3750–Thr-3971 is reductase-like domain.

This sequence in the C-terminal section; belongs to the NRP synthetase family.

It functions in the pathway mycotoxin biosynthesis. In terms of biological role, hybrid PKS-NRPS synthetase; part of the gene cluster that mediates the biosynthesis of the cytotoxic leucine-containing cytochalasans, including aspochalasin C, aspochalasin E, TMC-169, flavichalasine F, aspergillin PZ, aspochalasin M and flavichalasine G. The first step in the pathway is catalyzed by the hybrid PKS-NRPS ffsA that utilizes 8 units of malonyl-CoA to iteratively assemble the octaketide chain before addition of L-leucine by the C-terminal NRPS modules. Because ffsA lacks a designated enoylreductase (ER) domain, the required activity is provided the enoyl reductase fssC. The methyltransferase (MT) domain of ffsA catalyzes the alpha-methylation at C10 and C14 using S-adenosyl-L-methionine as the methyl-donating cosubstrate. Reduction by the hydrolyase ffsE, followed by dehydration and intra-molecular Diels-Alder cyclization by the Diels-Alderase ffsF then yield the required isoindolone-fused macrocycle. A number of oxidative steps catalyzed by the tailoring cytochrome P450 monooxygenase ffsD, the FAD-linked oxidoreductase ffsJ and the short-chain dehydrogenase/reductase ffsI, are further required to afford the final products. This is Polyketide synthase-nonribosomal peptide synthetase ffsA from Aspergillus flavipes.